Reading from the N-terminus, the 263-residue chain is Troponin T, fast skeletal muscle isoforms (263 aa).

The span at 1-26 (MSDTEEVEHGEEEYEEEAHEAEEVHE) shows a compositional bias: acidic residues. Disordered stretches follow at residues 1–66 (MSDT…FDDI), 107–188 (RAER…VLAE), and 243–263 (DQAQKHSKKAGAKGKVGGRWK). An N-acetylserine modification is found at Ser-2. 3 stretches are compositionally biased toward basic and acidic residues: residues 56–66 (PEGEKVDFDDI), 107–149 (RAER…DDLK), and 177–188 (TARETKKKVLAE). The segment covering 247 to 263 (KHSKKAGAKGKVGGRWK) has biased composition (basic residues).

This sequence belongs to the troponin T family.

Functionally, troponin T is the tropomyosin-binding subunit of troponin, the thin filament regulatory complex which confers calcium-sensitivity to striated muscle actomyosin ATPase activity. The sequence is that of Troponin T, fast skeletal muscle isoforms (TNNT3) from Gallus gallus (Chicken).